Reading from the N-terminus, the 541-residue chain is Ankyrin repeat domain-containing protein 13C (541 aa).

Over residues 1 to 20 (MTGEKIRSLRRDHKPSKEDG) the composition is skewed to basic and acidic residues. The segment at 1–53 (MTGEKIRSLRRDHKPSKEDGDVLEPCEEEATAALGGAFTGGRSGPGGSGKGGK) is disordered. Acidic residues predominate over residues 21–30 (DVLEPCEEEA). The span at 37–52 (AFTGGRSGPGGSGKGG) shows a compositional bias: gly residues. ANK repeat units lie at residues 111–142 (PSLYPVHECVFKGDVRRLSSLIRTHNIGQKDN), 143–172 (HGNTPLHLAVMLGNKECAHLLLAHNAPVKV), and 176–205 (QGWSPLAEAISYGDRQMITALLRKLKQQSR). Residue serine 411 is modified to Phosphoserine.

It is found in the endoplasmic reticulum membrane. In terms of biological role, acts as a molecular chaperone for G protein-coupled receptors, regulating their biogenesis and exit from the ER. The polypeptide is Ankyrin repeat domain-containing protein 13C (Ankrd13c) (Mus musculus (Mouse)).